The sequence spans 150 residues: Probable antibacterial peptide (150 aa).

The N-terminal stretch at 1–19 (MHIARFCLLSSMAVLALSA) is a signal peptide.

It localises to the secreted. In terms of biological role, has antibacterial activity in vitro. This is Probable antibacterial peptide from Riptortus clavatus (Bean bug).